The following is a 70-amino-acid chain: Brevinin-1S (70 aa).

Residues 1 to 22 (MFTLKKSLLLLFFLGTINLSLC) form the signal peptide. A propeptide spanning residues 23-44 (EEERNAEEERRDDPEERDVEVE) is cleaved from the precursor. A disulfide bond links cysteine 64 and cysteine 70.

The protein belongs to the frog skin active peptide (FSAP) family. Brevinin subfamily. As to expression, expressed by the skin glands.

It is found in the secreted. Antimicrobial peptide. The chain is Brevinin-1S from Odorrana schmackeri (Schmacker's frog).